We begin with the raw amino-acid sequence, 700 residues long: Elongation factor G (700 aa).

The 283-residue stretch at 8–290 (ERYRNIGISA…AVVEYLPAPT (283 aa)) folds into the tr-type G domain. Residues 17–24 (AHIDAGKT), 88–92 (DTPGH), and 142–145 (NKMD) each bind GTP.

Belongs to the TRAFAC class translation factor GTPase superfamily. Classic translation factor GTPase family. EF-G/EF-2 subfamily.

Its subcellular location is the cytoplasm. Functionally, catalyzes the GTP-dependent ribosomal translocation step during translation elongation. During this step, the ribosome changes from the pre-translocational (PRE) to the post-translocational (POST) state as the newly formed A-site-bound peptidyl-tRNA and P-site-bound deacylated tRNA move to the P and E sites, respectively. Catalyzes the coordinated movement of the two tRNA molecules, the mRNA and conformational changes in the ribosome. This is Elongation factor G from Haemophilus influenzae (strain 86-028NP).